Here is a 236-residue protein sequence, read N- to C-terminus: Exosome complex component Rrp4 (236 aa).

Residues 64-133 (GDKVIGKIIE…EIKESWLTLK (70 aa)) form the S1 motif domain. One can recognise a KH domain in the interval 141–199 (EGGHMVLIHASRVPRVIGKGGGMVNMVKELTSTRIIIGQNGLIWIDGPIEGVTMAIAAI).

The protein belongs to the RRP4 family. Component of the archaeal exosome complex. Forms a trimer of Rrp4 and/or Csl4 subunits. The trimer associates with a hexameric ring-like arrangement composed of 3 Rrp41-Rrp42 heterodimers.

It localises to the cytoplasm. Non-catalytic component of the exosome, which is a complex involved in RNA degradation. Increases the RNA binding and the efficiency of RNA degradation. Confers strong poly(A) specificity to the exosome. The polypeptide is Exosome complex component Rrp4 (Thermoplasma volcanium (strain ATCC 51530 / DSM 4299 / JCM 9571 / NBRC 15438 / GSS1)).